We begin with the raw amino-acid sequence, 284 residues long: Tropomyosin Pen a 1.0102 (284 aa).

The interval 1–51 is disordered; sequence MDAIKKKMQAMKLEKDNAMDRADTLEQQNKEANNRAEKSEEEVHNLQKRMQ. A coiled-coil region spans residues 1-273; that stretch reads MDAIKKKMQA…KEKYKSITDE (273 aa). The span at 12–45 shows a compositional bias: basic and acidic residues; the sequence is KLEKDNAMDRADTLEQQNKEANNRAEKSEEEVHN. 7 igE-binding regions span residues 43 to 57, 85 to 105, 133 to 153, 187 to 202, 247 to 284, 249 to 260, and 266 to 281; these read VHNLQKRMQQLENDL, VAALNRRIQLLEEDLERSEER, RSLSDEERMDALENQLKEARF, ESKIVELEEELRVVGN, QKLQKEVDRLEDELVNEKEKYKSITDELDQTFSELSGY, LQKEVDRLEDEL, and KYKSITDELDQTFSEL.

It belongs to the tropomyosin family. In terms of assembly, homodimer.

Its function is as follows. Tropomyosin, in association with the troponin complex, plays a central role in the calcium dependent regulation of muscle contraction. The sequence is that of Tropomyosin Pen a 1.0102 from Penaeus aztecus (Brown shrimp).